We begin with the raw amino-acid sequence, 564 residues long: Proline--tRNA ligase (564 aa).

It belongs to the class-II aminoacyl-tRNA synthetase family. ProS type 1 subfamily. In terms of assembly, homodimer.

The protein localises to the cytoplasm. It carries out the reaction tRNA(Pro) + L-proline + ATP = L-prolyl-tRNA(Pro) + AMP + diphosphate. Its function is as follows. Catalyzes the attachment of proline to tRNA(Pro) in a two-step reaction: proline is first activated by ATP to form Pro-AMP and then transferred to the acceptor end of tRNA(Pro). As ProRS can inadvertently accommodate and process non-cognate amino acids such as alanine and cysteine, to avoid such errors it has two additional distinct editing activities against alanine. One activity is designated as 'pretransfer' editing and involves the tRNA(Pro)-independent hydrolysis of activated Ala-AMP. The other activity is designated 'posttransfer' editing and involves deacylation of mischarged Ala-tRNA(Pro). The misacylated Cys-tRNA(Pro) is not edited by ProRS. The polypeptide is Proline--tRNA ligase (Xylella fastidiosa (strain Temecula1 / ATCC 700964)).